The sequence spans 61 residues: Small ribosomal subunit protein uS14B (61 aa).

The Zn(2+) site is built by cysteine 24, cysteine 27, cysteine 40, and cysteine 43.

Belongs to the universal ribosomal protein uS14 family. Zinc-binding uS14 subfamily. As to quaternary structure, part of the 30S ribosomal subunit. Contacts proteins S3 and S10. The cofactor is Zn(2+).

In terms of biological role, binds 16S rRNA, required for the assembly of 30S particles and may also be responsible for determining the conformation of the 16S rRNA at the A site. The polypeptide is Small ribosomal subunit protein uS14B (Bacillus velezensis (strain DSM 23117 / BGSC 10A6 / LMG 26770 / FZB42) (Bacillus amyloliquefaciens subsp. plantarum)).